Reading from the N-terminus, the 628-residue chain is Carbon monoxide dehydrogenase 1 (628 aa).

The [4Fe-4S] cluster site is built by Cys-44, Cys-52, Cys-53, Cys-56, Cys-61, and Cys-75. 6 residues coordinate [Ni-4Fe-5S] cluster: His-266, Cys-302, Cys-340, Cys-448, Cys-478, and Cys-519.

This sequence belongs to the Ni-containing carbon monoxide dehydrogenase family. Homodimer. Requires [4Fe-4S] cluster as cofactor. It depends on [Ni-4Fe-5S] cluster as a cofactor.

It carries out the reaction CO + 2 oxidized [2Fe-2S]-[ferredoxin] + H2O = 2 reduced [2Fe-2S]-[ferredoxin] + CO2 + 2 H(+). Its function is as follows. CODH oxidizes carbon monoxide coupled, via CooF, to the reduction of a hydrogen cation by a hydrogenase (possibly CooH). The protein is Carbon monoxide dehydrogenase 1 (cooS1) of Methanosarcina acetivorans (strain ATCC 35395 / DSM 2834 / JCM 12185 / C2A).